Here is a 180-residue protein sequence, read N- to C-terminus: ATP-dependent protease subunit HslV (180 aa).

Thr2 is an active-site residue. Residues Gly158, Cys161, and Thr164 each coordinate Na(+).

The protein belongs to the peptidase T1B family. HslV subfamily. A double ring-shaped homohexamer of HslV is capped on each side by a ring-shaped HslU homohexamer. The assembly of the HslU/HslV complex is dependent on binding of ATP.

It is found in the cytoplasm. The enzyme catalyses ATP-dependent cleavage of peptide bonds with broad specificity.. With respect to regulation, allosterically activated by HslU binding. Protease subunit of a proteasome-like degradation complex believed to be a general protein degrading machinery. The sequence is that of ATP-dependent protease subunit HslV from Baumannia cicadellinicola subsp. Homalodisca coagulata.